We begin with the raw amino-acid sequence, 318 residues long: Mevalonate 3-kinase (318 aa).

Leu-19 provides a ligand contact to substrate. ATP contacts are provided by residues 96–100 (YSSQN) and 105–108 (SGSS). 2 residues coordinate substrate: Glu-140 and Arg-144. Positions 185 and 188 each coordinate ATP.

It belongs to the GHMP kinase family. As to quaternary structure, homodimer.

The catalysed reaction is (R)-mevalonate + ATP = (R)-3-phosphomevalonate + ADP + H(+). The protein operates within isoprenoid biosynthesis; isopentenyl diphosphate biosynthesis via mevalonate pathway. Functionally, catalyzes the phosphorylation of mevalonate (MVA) to yield mevalonate-3-phosphate. Functions in an alternative mevalonate pathway, only present in extreme acidophiles of the Thermoplasmatales order, which passes through mevalonate 3-phosphate rather than mevalonate 5-phosphate. The sequence is that of Mevalonate 3-kinase from Thermoplasma acidophilum (strain ATCC 25905 / DSM 1728 / JCM 9062 / NBRC 15155 / AMRC-C165).